A 928-amino-acid chain; its full sequence is Isoleucine--tRNA ligase (928 aa).

A 'HIGH' region motif is present at residues 57 to 67 (PFANGNIHMGH). L-isoleucyl-5'-AMP is bound at residue E552. A 'KMSKS' region motif is present at residues 593 to 597 (KMSKS). Position 596 (K596) interacts with ATP. Zn(2+)-binding residues include C887, C890, C907, and C910.

It belongs to the class-I aminoacyl-tRNA synthetase family. IleS type 1 subfamily. In terms of assembly, monomer. Zn(2+) is required as a cofactor.

It localises to the cytoplasm. It catalyses the reaction tRNA(Ile) + L-isoleucine + ATP = L-isoleucyl-tRNA(Ile) + AMP + diphosphate. Catalyzes the attachment of isoleucine to tRNA(Ile). As IleRS can inadvertently accommodate and process structurally similar amino acids such as valine, to avoid such errors it has two additional distinct tRNA(Ile)-dependent editing activities. One activity is designated as 'pretransfer' editing and involves the hydrolysis of activated Val-AMP. The other activity is designated 'posttransfer' editing and involves deacylation of mischarged Val-tRNA(Ile). This chain is Isoleucine--tRNA ligase, found in Lacticaseibacillus casei (strain BL23) (Lactobacillus casei).